Here is an 84-residue protein sequence, read N- to C-terminus: Beta-defensin 119 (84 aa).

The signal sequence occupies residues 1 to 21 (MKLLYLFLAILLAIEEPVISG). 2 disulfides stabilise this stretch: cysteine 35–cysteine 49 and cysteine 39–cysteine 56.

The protein belongs to the beta-defensin family.

Its subcellular location is the secreted. In terms of biological role, has antibacterial activity. The sequence is that of Beta-defensin 119 (DEFB119) from Pan troglodytes (Chimpanzee).